The following is a 167-amino-acid chain: Large ribosomal subunit protein uL15 (167 aa).

A compositionally biased stretch (polar residues) spans 1–10 (MKLNQISDNP). The segment at 1 to 37 (MKLNQISDNPGATKDRMRVGRGIGSGKGKTAGRGVKG) is disordered. The segment covering 21-35 (RGIGSGKGKTAGRGV) has biased composition (gly residues).

Belongs to the universal ribosomal protein uL15 family. Part of the 50S ribosomal subunit.

Functionally, binds to the 23S rRNA. The polypeptide is Large ribosomal subunit protein uL15 (Methylobacterium radiotolerans (strain ATCC 27329 / DSM 1819 / JCM 2831 / NBRC 15690 / NCIMB 10815 / 0-1)).